The sequence spans 424 residues: Gamma-glutamyl phosphate reductase (424 aa).

Belongs to the gamma-glutamyl phosphate reductase family.

The protein resides in the cytoplasm. The enzyme catalyses L-glutamate 5-semialdehyde + phosphate + NADP(+) = L-glutamyl 5-phosphate + NADPH + H(+). The protein operates within amino-acid biosynthesis; L-proline biosynthesis; L-glutamate 5-semialdehyde from L-glutamate: step 2/2. Catalyzes the NADPH-dependent reduction of L-glutamate 5-phosphate into L-glutamate 5-semialdehyde and phosphate. The product spontaneously undergoes cyclization to form 1-pyrroline-5-carboxylate. This is Gamma-glutamyl phosphate reductase from Shewanella woodyi (strain ATCC 51908 / MS32).